The chain runs to 680 residues: Oligopeptidase A (680 aa).

Histidine 469 lines the Zn(2+) pocket. Glutamate 470 is a catalytic residue. The Zn(2+) site is built by histidine 473 and histidine 476.

Belongs to the peptidase M3 family. Zn(2+) serves as cofactor.

The enzyme catalyses Hydrolysis of oligopeptides, with broad specificity. Gly or Ala commonly occur as P1 or P1' residues, but more distant residues are also important, as is shown by the fact that Z-Gly-Pro-Gly-|-Gly-Pro-Ala is cleaved, but not Z-(Gly)(5).. Functionally, may play a specific role in the degradation of signal peptides after they are released from precursor forms of secreted proteins. Can cleave N-acetyl-L-Ala(4). This is Oligopeptidase A (prlC) from Salmonella typhimurium (strain LT2 / SGSC1412 / ATCC 700720).